We begin with the raw amino-acid sequence, 577 residues long: Sensor histidine kinase YesM (577 aa).

The Cytoplasmic portion of the chain corresponds to Met1–Lys17. The chain crosses the membrane as a helical span at residues Leu18 to Gln38. Residues Tyr39–Ser286 are Extracellular-facing. Residues Phe287–Gly307 form a helical membrane-spanning segment. Topologically, residues Arg308–Val577 are cytoplasmic. In terms of domain architecture, HAMP spans Asn312 to Glu368. In terms of domain architecture, Histidine kinase spans Glu365–Asn574. His392 bears the Phosphohistidine; by autocatalysis mark.

Its subcellular location is the cell membrane. It catalyses the reaction ATP + protein L-histidine = ADP + protein N-phospho-L-histidine.. Its function is as follows. Member of the two-component regulatory system YesM/YesN. Probably activates YesN by phosphorylation. This is Sensor histidine kinase YesM (yesM) from Bacillus subtilis (strain 168).